The primary structure comprises 283 residues: Elongation factor Ts (283 aa).

An involved in Mg(2+) ion dislocation from EF-Tu region spans residues 80–83 (TDFV).

This sequence belongs to the EF-Ts family.

Its subcellular location is the cytoplasm. In terms of biological role, associates with the EF-Tu.GDP complex and induces the exchange of GDP to GTP. It remains bound to the aminoacyl-tRNA.EF-Tu.GTP complex up to the GTP hydrolysis stage on the ribosome. The protein is Elongation factor Ts of Haemophilus ducreyi (strain 35000HP / ATCC 700724).